We begin with the raw amino-acid sequence, 201 residues long: Regulator of G-protein signaling 16 (201 aa).

S-palmitoyl cysteine attachment occurs at residues C2 and C12. One can recognise an RGS domain in the interval 64 to 180 (SFDLLLNSKN…LKSPAYRDLA (117 aa)). A Phosphotyrosine; by EGFR modification is found at Y167. Y176 carries the phosphotyrosine modification. A disordered region spans residues 181–201 (AQASATSTSAPSGSPAEPSHT).

Interacts with GNAI1 and GNAQ. Interacts with GNAI3, GNAI3 and GNAO1. In terms of processing, palmitoylated on Cys-2 and/or Cys-12. Phosphorylated. Phosphorylation at Tyr-167 by EGFR enhances GTPase accelerating (GAP) activity toward GNAI1. As to expression, retinal; also predominantly expressed in the liver and pituitary.

It localises to the membrane. Regulates G protein-coupled receptor signaling cascades. Inhibits signal transduction by increasing the GTPase activity of G protein alpha subunits, thereby driving them into their inactive GDP-bound form. Plays an important role in the phototransduction cascade by regulating the lifetime and effective concentration of activated transducin alpha. May regulate extra and intracellular mitogenic signals. In Mus musculus (Mouse), this protein is Regulator of G-protein signaling 16 (Rgs16).